The chain runs to 175 residues: Cytochrome c-type biogenesis protein CcmE (175 aa).

The Cytoplasmic segment spans residues 1–8 (MNAVRRKK). The helical; Signal-anchor for type II membrane protein transmembrane segment at 9-29 (LIWVAATLAGAIIAVLLVIYA) threads the bilayer. Residues 30 to 175 (IGQQTDYYFD…GNHTTSTLQE (146 aa)) lie on the Periplasmic side of the membrane. Residues His-124 and Tyr-128 each coordinate heme. The segment at 142 to 175 (AAKGVTPTSEQFSPAIPVKQTAGEGNHTTSTLQE) is disordered.

The protein belongs to the CcmE/CycJ family.

It localises to the cell inner membrane. Functionally, heme chaperone required for the biogenesis of c-type cytochromes. Transiently binds heme delivered by CcmC and transfers the heme to apo-cytochromes in a process facilitated by CcmF and CcmH. This is Cytochrome c-type biogenesis protein CcmE from Psychrobacter sp. (strain PRwf-1).